The following is a 524-amino-acid chain: Anthranilate synthase component 1 (524 aa).

Positions 1-16 (MQTTANHSSRSTQTGT) are enriched in polar residues. A disordered region spans residues 1-25 (MQTTANHSSRSTQTGTRAHGAALAE). L-tryptophan contacts are provided by residues Ser-74 and 298–300 (PYM). A chorismate-binding site is contributed by 339 to 340 (GT). An Isoglutamyl lysine isopeptide (Lys-Gln) (interchain with Q-Cter in protein Pup) cross-link involves residue Lys-355. Glu-366 is a binding site for Mg(2+). Chorismate-binding positions include Tyr-454, Arg-474, 488–490 (GGG), and Gly-490. Glu-503 contributes to the Mg(2+) binding site.

This sequence belongs to the anthranilate synthase component I family. As to quaternary structure, heterotetramer consisting of two non-identical subunits: a beta subunit (TrpG) and a large alpha subunit (TrpE). Mg(2+) is required as a cofactor.

The enzyme catalyses chorismate + L-glutamine = anthranilate + pyruvate + L-glutamate + H(+). It functions in the pathway amino-acid biosynthesis; L-tryptophan biosynthesis; L-tryptophan from chorismate: step 1/5. Its activity is regulated as follows. Feedback inhibited by tryptophan. Its function is as follows. Part of a heterotetrameric complex that catalyzes the two-step biosynthesis of anthranilate, an intermediate in the biosynthesis of L-tryptophan. In the first step, the glutamine-binding beta subunit (TrpG) of anthranilate synthase (AS) provides the glutamine amidotransferase activity which generates ammonia as a substrate that, along with chorismate, is used in the second step, catalyzed by the large alpha subunit of AS (TrpE) to produce anthranilate. In the absence of TrpG, TrpE can synthesize anthranilate directly from chorismate and high concentrations of ammonia. This chain is Anthranilate synthase component 1 (trpE), found in Mycolicibacterium smegmatis (strain ATCC 700084 / mc(2)155) (Mycobacterium smegmatis).